The sequence spans 346 residues: MYIDTGIMSNNIFLFAFFALVGLTRIEAMPTKGSEGTWNVDYEDQEHTGITCRENEHYNSTRIECEDECNDRNNKLCYRFQQFCWCNEGYIRNSSHICVKLEDCLKDEEQKSETLASSANNDSSKRLEDDLKLFSHDSVSHTSLEPETQAQKFNGIIDQETLDLVFGKPENSSADNKPLETKTQAQKFNGIINEETLDLVFGKPENSWAENKPLETKTQAQKFNGIINEETLDLVFGKPENSWAENKPLETETQAQKFNGIINEETLDLVFGKPENSWAENKPLETKTQAQKFNGIINEETLDLVFGKPENSWAENKPLETKTQTQKFNGIIDQYTRRIVFVFSNI.

An N-terminal signal peptide occupies residues 1 to 28 (MYIDTGIMSNNIFLFAFFALVGLTRIEA). A TIL domain is found at 52 to 104 (CRENEHYNSTRIECEDECNDRNNKLCYRFQQFCWCNEGYIRNSSHICVKLEDC).

Belongs to the polydnaviridae EGF-like motif protein family. As to quaternary structure, interacts with host PAP1, PAP3 and SPH2.

In terms of biological role, counteracts the host humoral immune response by inhibiting the processing and the amidolytic activity of host PAP1 and PAP3. Thereby, melanization of host hemolymph, normally producing several reactive intermediates toxic for viruses, is deregulated and proper immune response cannot occur. The sequence is that of Protease inhibitor Egf1.5b (O5) from Microplitis demolitor (Parasitoid wasp).